A 63-amino-acid polypeptide reads, in one-letter code: Large ribosomal subunit protein bL32 (63 aa).

The protein belongs to the bacterial ribosomal protein bL32 family.

The protein is Large ribosomal subunit protein bL32 (rpmF) of Aquifex aeolicus (strain VF5).